Reading from the N-terminus, the 154-residue chain is UPF0178 protein ABC1688 (154 aa).

The protein belongs to the UPF0178 family.

This Shouchella clausii (strain KSM-K16) (Alkalihalobacillus clausii) protein is UPF0178 protein ABC1688.